A 388-amino-acid chain; its full sequence is Succinate--CoA ligase [ADP-forming] subunit beta (388 aa).

Residues 9-244 (KEILRKYNVP…LDEEDANEIE (236 aa)) form the ATP-grasp domain. Residues Lys-46, 53–55 (GRG), Glu-99, Ala-102, and Glu-107 contribute to the ATP site. Residues Asn-199 and Asp-213 each contribute to the Mg(2+) site. Residues Asn-264 and 321–323 (GIM) contribute to the substrate site.

This sequence belongs to the succinate/malate CoA ligase beta subunit family. As to quaternary structure, heterotetramer of two alpha and two beta subunits. Mg(2+) is required as a cofactor.

The enzyme catalyses succinate + ATP + CoA = succinyl-CoA + ADP + phosphate. The catalysed reaction is GTP + succinate + CoA = succinyl-CoA + GDP + phosphate. It functions in the pathway carbohydrate metabolism; tricarboxylic acid cycle; succinate from succinyl-CoA (ligase route): step 1/1. Succinyl-CoA synthetase functions in the citric acid cycle (TCA), coupling the hydrolysis of succinyl-CoA to the synthesis of either ATP or GTP and thus represents the only step of substrate-level phosphorylation in the TCA. The beta subunit provides nucleotide specificity of the enzyme and binds the substrate succinate, while the binding sites for coenzyme A and phosphate are found in the alpha subunit. The sequence is that of Succinate--CoA ligase [ADP-forming] subunit beta from Ralstonia nicotianae (strain ATCC BAA-1114 / GMI1000) (Ralstonia solanacearum).